A 197-amino-acid chain; its full sequence is Imidazoleglycerol-phosphate dehydratase (197 aa).

The protein belongs to the imidazoleglycerol-phosphate dehydratase family.

It is found in the cytoplasm. The catalysed reaction is D-erythro-1-(imidazol-4-yl)glycerol 3-phosphate = 3-(imidazol-4-yl)-2-oxopropyl phosphate + H2O. It functions in the pathway amino-acid biosynthesis; L-histidine biosynthesis; L-histidine from 5-phospho-alpha-D-ribose 1-diphosphate: step 6/9. The chain is Imidazoleglycerol-phosphate dehydratase from Alkalilimnicola ehrlichii (strain ATCC BAA-1101 / DSM 17681 / MLHE-1).